The sequence spans 79 residues: MEILAYILTALVTLEHFYILYLEMFTIESKSGVRQSRVIQRLFGSRDYFWLCHQPNFGDLFLFRLCDYRRSFWGSYDEE.

This is an uncharacterized protein from Haemophilus influenzae (strain ATCC 51907 / DSM 11121 / KW20 / Rd).